The following is a 142-amino-acid chain: Small ribosomal subunit protein uS12 (142 aa).

This sequence belongs to the universal ribosomal protein uS12 family. In terms of assembly, part of the 30S ribosomal subunit.

In terms of biological role, with S4 and S5 plays an important role in translational accuracy. Located at the interface of the 30S and 50S subunits. In Methanothrix thermoacetophila (strain DSM 6194 / JCM 14653 / NBRC 101360 / PT) (Methanosaeta thermophila), this protein is Small ribosomal subunit protein uS12.